A 293-amino-acid polypeptide reads, in one-letter code: Undecaprenyl-diphosphatase (293 aa).

Transmembrane regions (helical) follow at residues 3–23 (IALA…EFLP), 43–63 (KGKI…CWEF), 85–105 (INVI…GKAI), 109–129 (LFNP…ILWA), 203–223 (VATE…TVYE), 238–258 (IFAV…RWLL), and 269–289 (FAWY…THLI).

The protein belongs to the UppP family.

Its subcellular location is the cell inner membrane. The enzyme catalyses di-trans,octa-cis-undecaprenyl diphosphate + H2O = di-trans,octa-cis-undecaprenyl phosphate + phosphate + H(+). Its function is as follows. Catalyzes the dephosphorylation of undecaprenyl diphosphate (UPP). Confers resistance to bacitracin. This chain is Undecaprenyl-diphosphatase, found in Ralstonia pickettii (strain 12J).